The following is a 390-amino-acid chain: Flavohemoprotein (390 aa).

Position 2 is an N-acetylserine (S2). The Globin domain occupies 12 to 149; that stretch reads PLTPTEINFL…LAQTLIDAEA (138 aa). Heme b is bound at residue H96. Active-site charge relay system residues include Y106 and E148. The interval 157 to 390 is reductase; the sequence is WEEFKDFRVT…EFFGPTDPDC (234 aa). Positions 158-263 constitute an FAD-binding FR-type domain; sequence EEFKDFRVTK…HAPVGTMKYD (106 aa). Residues Y196 and 214-217 each bind FAD; that span reads REYS. 277–282 contributes to the NADP(+) binding site; sequence GIGITP. 382 to 385 provides a ligand contact to FAD; that stretch reads FFGP.

The protein belongs to the globin family. Two-domain flavohemoproteins subfamily. In the C-terminal section; belongs to the flavoprotein pyridine nucleotide cytochrome reductase family. Requires FAD as cofactor. The cofactor is heme b.

The protein localises to the cytoplasm. It catalyses the reaction 2 nitric oxide + NADPH + 2 O2 = 2 nitrate + NADP(+) + H(+). The enzyme catalyses 2 nitric oxide + NADH + 2 O2 = 2 nitrate + NAD(+) + H(+). Is involved in NO detoxification in an aerobic process, termed nitric oxide dioxygenase (NOD) reaction that utilizes O(2) and NAD(P)H to convert NO to nitrate, which protects the fungus from various noxious nitrogen compounds. Therefore, plays a central role in the inducible response to nitrosative stress. In terms of biological role, in the presence of oxygen and NADH, it has NADH oxidase activity, which leads to the generation of superoxide and H(2)O(2). Under anaerobic conditions, it also exhibits nitric oxide reductase and FAD reductase activities. However, all these reactions are much lower than NOD activity. This Candida norvegensis (Yeast) protein is Flavohemoprotein.